A 407-amino-acid polypeptide reads, in one-letter code: Transcriptional regulator alnR (407 aa).

Positions 23–53 (SCDTCQEAKVKCSQHKPSCHRCLRHRQPCVY) form a DNA-binding region, zn(2)-C6 fungal-type. Positions 53–85 (YSPQRRSGRPPKRPSPSSRLGPESNNSGDDIHN) are disordered. Positions 75 to 85 (ESNNSGDDIHN) are enriched in polar residues.

The protein localises to the nucleus. Its function is as follows. Transcriptional regulator involved in the positive regulation of the expression of the gene cluster that mediates the biosynthesis of asperlin, a polyketide showing anti-inflammatory, antitumor and antibiotic activities. The polypeptide is Transcriptional regulator alnR (Emericella nidulans (strain FGSC A4 / ATCC 38163 / CBS 112.46 / NRRL 194 / M139) (Aspergillus nidulans)).